A 496-amino-acid chain; its full sequence is Apolipoprotein N-acyltransferase (496 aa).

6 consecutive transmembrane segments (helical) span residues Ile6–Pro26, Phe50–Val70, Phe77–Ser97, Leu114–Leu134, Ile148–Ile168, and Leu183–Met203. Positions Val220 to Thr464 constitute a CN hydrolase domain. The Proton acceptor role is filled by Glu259. Lys322 is an active-site residue. Cys372 acts as the Nucleophile in catalysis. The chain crosses the membrane as a helical span at residues Phe474 to Phe494.

This sequence belongs to the CN hydrolase family. Apolipoprotein N-acyltransferase subfamily.

The protein localises to the cell inner membrane. It carries out the reaction N-terminal S-1,2-diacyl-sn-glyceryl-L-cysteinyl-[lipoprotein] + a glycerophospholipid = N-acyl-S-1,2-diacyl-sn-glyceryl-L-cysteinyl-[lipoprotein] + a 2-acyl-sn-glycero-3-phospholipid + H(+). It participates in protein modification; lipoprotein biosynthesis (N-acyl transfer). Catalyzes the phospholipid dependent N-acylation of the N-terminal cysteine of apolipoprotein, the last step in lipoprotein maturation. The polypeptide is Apolipoprotein N-acyltransferase (Rickettsia typhi (strain ATCC VR-144 / Wilmington)).